Here is a 713-residue protein sequence, read N- to C-terminus: Phenylalanine ammonia-lyase (713 aa).

The active-site Proton donor/acceptor is the Tyr116. The 5-imidazolinone (Ala-Gly) cross-link spans Ala217–Gly219. Position 218 is a 2,3-didehydroalanine (Ser) (Ser218). (E)-cinnamate contacts are provided by Asn272, Gln362, Arg368, Asn399, Lys470, Glu498, and Asn501.

It belongs to the PAL/histidase family. As to quaternary structure, homotetramer. Post-translationally, contains an active site 4-methylidene-imidazol-5-one (MIO), which is formed autocatalytically by cyclization and dehydration of residues Ala-Ser-Gly.

The protein resides in the cytoplasm. It carries out the reaction L-phenylalanine = (E)-cinnamate + NH4(+). Its pathway is phenylpropanoid metabolism; trans-cinnamate biosynthesis; trans-cinnamate from L-phenylalanine: step 1/1. In terms of biological role, catalyzes the non-oxidative deamination of L-phenylalanine to form trans-cinnamic acid and a free ammonium ion. Facilitates the commitment step in phenylpropanoid pathways that produce secondary metabolites such as lignins, coumarins and flavonoids. This chain is Phenylalanine ammonia-lyase (PAL), found in Rhodotorula mucilaginosa (Yeast).